The following is a 314-amino-acid chain: Deoxymugineic acid synthase 1-D (314 aa).

Residues 1-21 (MGAGEKTAAGMPRIGMGTAVQ) form a disordered region. Residue Asp-44 participates in NADP(+) binding. Tyr-49 serves as the catalytic Proton donor. His-112 provides a ligand contact to substrate. NADP(+) is bound by residues 158-159 (AN), Gln-180, 258-266 (FDEARMREN), and 273-281 (ELTEEERLR).

Belongs to the aldo/keto reductase family. As to expression, mostly expressed in root tissues, observed, at low levels, in mesocotyl and embryonic roots, seedling roots, crown and seedling leafes, mature bracts, anthers, pistil, caryopsis and embryos.

It carries out the reaction 2'-deoxymugineate + NAD(+) = 3''-deamino-3''-oxonicotianamine + NADH + H(+). The enzyme catalyses 2'-deoxymugineate + NADP(+) = 3''-deamino-3''-oxonicotianamine + NADPH + H(+). The protein operates within siderophore biosynthesis. In terms of biological role, catalyzes the reduction of a 3''-keto intermediate during the biosynthesis of 2'-deoxymugineic acid (DMA) from L-Met. Involved in the formation of phytosiderophores (MAs) belonging to the mugineic acid family and required to acquire iron. The polypeptide is Deoxymugineic acid synthase 1-D (Triticum aestivum (Wheat)).